A 507-amino-acid chain; its full sequence is Heat shock 70 kDa protein 14-B (507 aa).

Belongs to the heat shock protein 70 family. As to quaternary structure, component of ribosome-associated complex (RAC).

It is found in the cytoplasm. The protein localises to the cytosol. Component of the ribosome-associated complex (RAC), a complex involved in folding or maintaining nascent polypeptides in a folding-competent state. In Xenopus laevis (African clawed frog), this protein is Heat shock 70 kDa protein 14-B (hspa14-b).